The following is a 235-amino-acid chain: 2-C-methyl-D-erythritol 4-phosphate cytidylyltransferase (235 aa).

Belongs to the IspD/TarI cytidylyltransferase family. IspD subfamily.

It catalyses the reaction 2-C-methyl-D-erythritol 4-phosphate + CTP + H(+) = 4-CDP-2-C-methyl-D-erythritol + diphosphate. It functions in the pathway isoprenoid biosynthesis; isopentenyl diphosphate biosynthesis via DXP pathway; isopentenyl diphosphate from 1-deoxy-D-xylulose 5-phosphate: step 2/6. Its function is as follows. Catalyzes the formation of 4-diphosphocytidyl-2-C-methyl-D-erythritol from CTP and 2-C-methyl-D-erythritol 4-phosphate (MEP). In Pseudomonas putida (strain ATCC 47054 / DSM 6125 / CFBP 8728 / NCIMB 11950 / KT2440), this protein is 2-C-methyl-D-erythritol 4-phosphate cytidylyltransferase.